The following is a 95-amino-acid chain: Large ribosomal subunit protein uL23 (95 aa).

Belongs to the universal ribosomal protein uL23 family. In terms of assembly, part of the 50S ribosomal subunit. Contacts protein L29, and trigger factor when it is bound to the ribosome.

In terms of biological role, one of the early assembly proteins it binds 23S rRNA. One of the proteins that surrounds the polypeptide exit tunnel on the outside of the ribosome. Forms the main docking site for trigger factor binding to the ribosome. This Desulforamulus reducens (strain ATCC BAA-1160 / DSM 100696 / MI-1) (Desulfotomaculum reducens) protein is Large ribosomal subunit protein uL23.